We begin with the raw amino-acid sequence, 283 residues long: Thymidylate synthase (283 aa).

Position 22 (Arg22) interacts with dUMP. Catalysis depends on Cys160, which acts as the Nucleophile. Residues 180–183 (RSCD), Asn191, and 221–223 (HIY) each bind dUMP. Asp183 lines the (6R)-5,10-methylene-5,6,7,8-tetrahydrofolate pocket. (6R)-5,10-methylene-5,6,7,8-tetrahydrofolate is bound at residue Ser282.

It belongs to the thymidylate synthase family. Bacterial-type ThyA subfamily. Homodimer.

It localises to the cytoplasm. It catalyses the reaction dUMP + (6R)-5,10-methylene-5,6,7,8-tetrahydrofolate = 7,8-dihydrofolate + dTMP. It participates in pyrimidine metabolism; dTTP biosynthesis. In terms of biological role, catalyzes the reductive methylation of 2'-deoxyuridine-5'-monophosphate (dUMP) to 2'-deoxythymidine-5'-monophosphate (dTMP) while utilizing 5,10-methylenetetrahydrofolate (mTHF) as the methyl donor and reductant in the reaction, yielding dihydrofolate (DHF) as a by-product. This enzymatic reaction provides an intracellular de novo source of dTMP, an essential precursor for DNA biosynthesis. The protein is Thymidylate synthase of Shewanella piezotolerans (strain WP3 / JCM 13877).